We begin with the raw amino-acid sequence, 102 residues long: uncharacterized protein (102 aa).

The segment covering 1–13 (PSSSQALSVPSLS) has biased composition (low complexity). The tract at residues 1–24 (PSSSQALSVPSLSSEKKTASPTCV) is disordered.

This is an uncharacterized protein from Human cytomegalovirus (strain AD169) (HHV-5).